We begin with the raw amino-acid sequence, 350 residues long: GTPase Obg (350 aa).

Positions 1–159 (MKLVDEAEIL…RLLKLELKLL (159 aa)) constitute an Obg domain. The region spanning 160-337 (ADVGLLGFPN…IMKDVMAFFD (178 aa)) is the OBG-type G domain. GTP contacts are provided by residues 166–173 (GFPNAGKS), 191–195 (FTTLY), 213–216 (DVPG), 287–290 (NKAD), and 318–320 (SAL). Positions 173 and 193 each coordinate Mg(2+).

This sequence belongs to the TRAFAC class OBG-HflX-like GTPase superfamily. OBG GTPase family. As to quaternary structure, monomer. It depends on Mg(2+) as a cofactor.

The protein resides in the cytoplasm. Functionally, an essential GTPase which binds GTP, GDP and possibly (p)ppGpp with moderate affinity, with high nucleotide exchange rates and a fairly low GTP hydrolysis rate. Plays a role in control of the cell cycle, stress response, ribosome biogenesis and in those bacteria that undergo differentiation, in morphogenesis control. In Xanthomonas campestris pv. campestris (strain 8004), this protein is GTPase Obg.